We begin with the raw amino-acid sequence, 266 residues long: HLA class II histocompatibility antigen, DR beta 4 chain (266 aa).

Positions 1-29 (MVCLKLPGGSCMAALTVTLTVLSSPLALA) are cleaved as a signal peptide. Positions 30-124 (GDTQPRFLEQ…VESFTVQRRV (95 aa)) are beta-1. Over 30–227 (GDTQPRFLEQ…SARSESAQSK (198 aa)) the chain is Extracellular. Cystine bridges form between Cys44–Cys108 and Cys146–Cys202. A glycan (N-linked (GlcNAc...) asparagine) is linked at Asn48. A beta-2 region spans residues 125 to 227 (QPKVTVYPSK…SARSESAQSK (103 aa)). In terms of domain architecture, Ig-like C1-type spans 126-216 (PKVTVYPSKT…PSMMSPLTVQ (91 aa)). Residues 228-250 (MLSGVGGFVLGLLFLGTGLFIYF) traverse the membrane as a helical segment. Topologically, residues 251–266 (RNQKGHSGLQPTGLLS) are cytoplasmic. Lys254 participates in a covalent cross-link: Glycyl lysine isopeptide (Lys-Gly) (interchain with G-Cter in ubiquitin).

The protein belongs to the MHC class II family. Heterodimer of an alpha and a beta subunit; also referred as MHC class II molecule. In the endoplasmic reticulum (ER) it forms a heterononamer; 3 MHC class II molecules bind to a CD74 homotrimer (also known as invariant chain or HLA class II histocompatibility antigen gamma chain). In the endosomal/lysosomal system; CD74 undergoes sequential degradation by various proteases; leaving a small fragment termed CLIP on each MHC class II molecule. MHC class II molecule interacts with HLA_DM, and HLA_DO in B-cells, in order to release CLIP and facilitate the binding of antigenic peptides. In terms of processing, ubiquitinated by MARCH1 and MARCH8 at Lys-254 leading to sorting into the endosome system and down-regulation of MHC class II. When associated with ubiquitination of the alpha subunit of HLA-DR: HLA-DRA 'Lys-244', the down-regulation of MHC class II may be highly effective.

Its subcellular location is the cell membrane. It is found in the endoplasmic reticulum membrane. The protein resides in the golgi apparatus. The protein localises to the trans-Golgi network membrane. It localises to the endosome membrane. Its subcellular location is the lysosome membrane. It is found in the late endosome membrane. Binds peptides derived from antigens that access the endocytic route of antigen presenting cells (APC) and presents them on the cell surface for recognition by the CD4 T-cells. The peptide binding cleft accommodates peptides of 10-30 residues. The peptides presented by MHC class II molecules are generated mostly by degradation of proteins that access the endocytic route, where they are processed by lysosomal proteases and other hydrolases. Exogenous antigens that have been endocytosed by the APC are thus readily available for presentation via MHC II molecules, and for this reason this antigen presentation pathway is usually referred to as exogenous. As membrane proteins on their way to degradation in lysosomes as part of their normal turn-over are also contained in the endosomal/lysosomal compartments, exogenous antigens must compete with those derived from endogenous components. Autophagy is also a source of endogenous peptides, autophagosomes constitutively fuse with MHC class II loading compartments. In addition to APCs, other cells of the gastrointestinal tract, such as epithelial cells, express MHC class II molecules and CD74 and act as APCs, which is an unusual trait of the GI tract. To produce a MHC class II molecule that presents an antigen, three MHC class II molecules (heterodimers of an alpha and a beta chain) associate with a CD74 trimer in the ER to form a heterononamer. Soon after the entry of this complex into the endosomal/lysosomal system where antigen processing occurs, CD74 undergoes a sequential degradation by various proteases, including CTSS and CTSL, leaving a small fragment termed CLIP (class-II-associated invariant chain peptide). The removal of CLIP is facilitated by HLA-DM via direct binding to the alpha-beta-CLIP complex so that CLIP is released. HLA-DM stabilizes MHC class II molecules until primary high affinity antigenic peptides are bound. The MHC II molecule bound to a peptide is then transported to the cell membrane surface. In B-cells, the interaction between HLA-DM and MHC class II molecules is regulated by HLA-DO. Primary dendritic cells (DCs) also to express HLA-DO. Lysosomal microenvironment has been implicated in the regulation of antigen loading into MHC II molecules, increased acidification produces increased proteolysis and efficient peptide loading. In Homo sapiens (Human), this protein is HLA class II histocompatibility antigen, DR beta 4 chain (HLA-DRB4).